The sequence spans 340 residues: Phosphoribosylformylglycinamidine cyclo-ligase (340 aa).

The protein belongs to the AIR synthase family.

The protein localises to the cytoplasm. The enzyme catalyses 2-formamido-N(1)-(5-O-phospho-beta-D-ribosyl)acetamidine + ATP = 5-amino-1-(5-phospho-beta-D-ribosyl)imidazole + ADP + phosphate + H(+). The protein operates within purine metabolism; IMP biosynthesis via de novo pathway; 5-amino-1-(5-phospho-D-ribosyl)imidazole from N(2)-formyl-N(1)-(5-phospho-D-ribosyl)glycinamide: step 2/2. In Streptococcus pneumoniae (strain P1031), this protein is Phosphoribosylformylglycinamidine cyclo-ligase.